Here is a 216-residue protein sequence, read N- to C-terminus: Adenylate kinase (216 aa).

ATP is bound at residue 10 to 15; that stretch reads GAGKGT. Residues 30-59 form an NMP region; sequence STGDIFRKNISENTPLGIEAKSYMDNGQLV. Residues T31, R36, 57 to 59, 85 to 88, and Q92 each bind AMP; these read QLV and GFPR. The interval 126–163 is LID; it reads GRRVCPSCGASYHIKFNPPTNDGKCDLCGSDVIQRKDD. R127 lines the ATP pocket. C130 and C133 together coordinate Zn(2+). Residue 136–137 coordinates ATP; it reads SY. The Zn(2+) site is built by C150 and C153. AMP is bound by residues R160 and R171. Q199 contacts ATP.

This sequence belongs to the adenylate kinase family. Monomer.

It is found in the cytoplasm. It carries out the reaction AMP + ATP = 2 ADP. It functions in the pathway purine metabolism; AMP biosynthesis via salvage pathway; AMP from ADP: step 1/1. In terms of biological role, catalyzes the reversible transfer of the terminal phosphate group between ATP and AMP. Plays an important role in cellular energy homeostasis and in adenine nucleotide metabolism. The sequence is that of Adenylate kinase from Clostridium perfringens (strain ATCC 13124 / DSM 756 / JCM 1290 / NCIMB 6125 / NCTC 8237 / Type A).